A 449-amino-acid chain; its full sequence is Ribosomal protein uS12 methylthiotransferase RimO (449 aa).

The 117-residue stretch at 7–123 (QKVSMVSLGC…VAEILAEHHA (117 aa)) folds into the MTTase N-terminal domain. C16, C52, C86, C161, C165, and C168 together coordinate [4Fe-4S] cluster. The Radical SAM core domain occupies 147–377 (SSPGWYAYLK…MKTQARVSFR (231 aa)). The TRAM domain maps to 380–448 (RAMVGQTEQV…DYDLVAEMIE (69 aa)).

It belongs to the methylthiotransferase family. RimO subfamily. Requires [4Fe-4S] cluster as cofactor.

Its subcellular location is the cytoplasm. It carries out the reaction L-aspartate(89)-[ribosomal protein uS12]-hydrogen + (sulfur carrier)-SH + AH2 + 2 S-adenosyl-L-methionine = 3-methylsulfanyl-L-aspartate(89)-[ribosomal protein uS12]-hydrogen + (sulfur carrier)-H + 5'-deoxyadenosine + L-methionine + A + S-adenosyl-L-homocysteine + 2 H(+). Its function is as follows. Catalyzes the methylthiolation of an aspartic acid residue of ribosomal protein uS12. In Trichlorobacter lovleyi (strain ATCC BAA-1151 / DSM 17278 / SZ) (Geobacter lovleyi), this protein is Ribosomal protein uS12 methylthiotransferase RimO.